The primary structure comprises 100 residues: NADH-quinone oxidoreductase subunit K (100 aa).

The next 3 helical transmembrane spans lie at 4 to 24 (LTHG…GLVI), 28 to 48 (LLFM…AFVV), and 60 to 80 (VMYI…LALL).

This sequence belongs to the complex I subunit 4L family. NDH-1 is composed of 13 different subunits. Subunits NuoA, H, J, K, L, M, N constitute the membrane sector of the complex.

Its subcellular location is the cell inner membrane. It catalyses the reaction a quinone + NADH + 5 H(+)(in) = a quinol + NAD(+) + 4 H(+)(out). In terms of biological role, NDH-1 shuttles electrons from NADH, via FMN and iron-sulfur (Fe-S) centers, to quinones in the respiratory chain. The immediate electron acceptor for the enzyme in this species is believed to be ubiquinone. Couples the redox reaction to proton translocation (for every two electrons transferred, four hydrogen ions are translocated across the cytoplasmic membrane), and thus conserves the redox energy in a proton gradient. In Salmonella agona (strain SL483), this protein is NADH-quinone oxidoreductase subunit K.